A 307-amino-acid chain; its full sequence is Mitogen-activated protein kinase kinase 7 (307 aa).

In terms of domain architecture, Protein kinase spans 45–303; it reads VEKLHVLGRG…ASQLLGHPFL (259 aa). ATP-binding positions include 51–59 and K74; that span reads LGRGSSGIV. D165 functions as the Proton acceptor in the catalytic mechanism. Phosphoserine occurs at positions 193 and 199. T203 bears the Phosphothreonine mark.

It belongs to the protein kinase superfamily. STE Ser/Thr protein kinase family. MAP kinase kinase subfamily. As to quaternary structure, interacts with MPK15. Phosphorylation at Ser-193 and Ser-199 by MAP kinase kinase kinases positively regulates kinase activity. In terms of tissue distribution, expressed in all tissues, with a relatively higher level in leaves and lower level in roots and flowers.

It catalyses the reaction L-seryl-[protein] + ATP = O-phospho-L-seryl-[protein] + ADP + H(+). It carries out the reaction L-threonyl-[protein] + ATP = O-phospho-L-threonyl-[protein] + ADP + H(+). The enzyme catalyses L-tyrosyl-[protein] + ATP = O-phospho-L-tyrosyl-[protein] + ADP + H(+). Functionally, may function as a negative regulator of polar auxin transport. Positively regulates plant basal and systemic acquired resistance (SAR). Activates MPK3 and MPK6 in vitro. The sequence is that of Mitogen-activated protein kinase kinase 7 (MKK7) from Arabidopsis thaliana (Mouse-ear cress).